Here is a 581-residue protein sequence, read N- to C-terminus: Putative aluminum-activated malate transporter 3 (581 aa).

6 helical membrane passes run 98–118 (MGLALTLTSILIFFKIPGLEL), 122–142 (YLWAILTVVVIFEFSIGATFS), 148–164 (GLGTLSAGGLALGMSWI), 167–187 (MTGNWADVFNAASIFVVAFFA), 201–218 (YGFRVFLLTYCYVIVSGY), and 231–251 (FLLIALGASVGLIVNTCIYPI).

This sequence belongs to the aromatic acid exporter (TC 2.A.85) family.

Its subcellular location is the membrane. Functionally, malate transporter. The protein is Putative aluminum-activated malate transporter 3 (ALMT3) of Arabidopsis thaliana (Mouse-ear cress).